The primary structure comprises 486 residues: Serine/threonine-protein kinase 32C (486 aa).

Residues 1–56 (MRSGAERRGSSAAASPGSPPPGRARPAGSDAPSALPPPAAGQPRARDSGDVRSQPR) form a disordered region. 3 positions are modified to phosphoserine: S10, S15, and S18. Residues 24–33 (ARPAGSDAPS) show a composition bias toward low complexity. One can recognise a Protein kinase domain in the interval 93 to 353 (FQILRAIGKG…LQDVQAAPAL (261 aa)). ATP contacts are provided by residues 99-107 (IGKGSFGKV) and K122. Catalysis depends on D216, which acts as the Proton acceptor. Positions 396–405 (HKKKKRLAKN) are enriched in basic residues. Disordered stretches follow at residues 396–419 (HKKK…QSEN) and 444–486 (SQDL…AGSG).

It belongs to the protein kinase superfamily. Ser/Thr protein kinase family. Mg(2+) serves as cofactor.

It carries out the reaction L-seryl-[protein] + ATP = O-phospho-L-seryl-[protein] + ADP + H(+). The enzyme catalyses L-threonyl-[protein] + ATP = O-phospho-L-threonyl-[protein] + ADP + H(+). This is Serine/threonine-protein kinase 32C from Homo sapiens (Human).